The primary structure comprises 413 residues: Sulfoquinovose isomerase (413 aa).

The 6-sulfo-beta-D-quinovose site is built by Arg55, Tyr111, Asn172, His176, and Arg238. The active-site Proton donor/acceptor is the His248. 6-sulfo-beta-D-quinovose-binding residues include Glu251, Gln362, Gln379, and His383. Residue His383 is the Proton donor/acceptor of the active site.

It belongs to the N-acylglucosamine 2-epimerase family. Homohexamer.

It catalyses the reaction 6-sulfo-beta-D-quinovose = 6-deoxy-6-sulfo-D-fructose. The catalysed reaction is 6-sulfo-beta-D-quinovose = 6-sulfo-D-rhamnose. Its activity is regulated as follows. Significantly inhibited by Cu(2+), Fe(3+) and Co(2+). Partially inhibited by Mg(2+), Ca(2+) and Mn(2+). Also inhibited by ATP, ADP, dATP, TTP and GTP. Catalyzes the isomerization of sulfoquinovose (SQ) to 6-deoxy-6-sulfo-D-fructose (SF). Can also catalyze the interconversion of SQ and sulforhamnose (SR). Has a clear preference for beta-SQ and little-to-no activity on alpha-SQ. In vitro, can also catalyze the interconversion of mannose, fructose and glucose, or lyxose and xylulose, but has extremely low activity with glucose. In Escherichia coli (strain K12), this protein is Sulfoquinovose isomerase (yihS).